We begin with the raw amino-acid sequence, 349 residues long: Sexual stage-specific protein G37 (349 aa).

Positions 1-18 (MKLYLVTFLFFVIYKNKT) are cleaved as a signal peptide. Residues 19–91 (FVDCVTKKQD…INQVSNNIMR (73 aa)) lie on the Extracellular side of the membrane. The helical transmembrane segment at 92–112 (VYISLLSLFLFPYFSYIGIFG) threads the bilayer. Residues 113–117 (HSRNK) are Cytoplasmic-facing. Residues 118-138 (ANLTLSSLLAYFALLVSFFLF) form a helical membrane-spanning segment. The Extracellular portion of the chain corresponds to 139–140 (NG). A helical transmembrane segment spans residues 141–161 (ILNIGFVTSLPLVVAVLIFIL). Topologically, residues 162-176 (GVSDCEINFLYKYTR) are cytoplasmic. Residues 177-197 (YIFCFIISKLIYDVVTYISKD) form a helical membrane-spanning segment. At 198–218 (GANIFDYGFSGHIYMNLLRGK) the chain is on the extracellular side. A helical membrane pass occupies residues 219–239 (YYIVLKLIHLIILSLISLIII). The Cytoplasmic segment spans residues 240–262 (KICPKIFSNNHLKSPISITFDKY). A helical membrane pass occupies residues 263–283 (IISFLCSLPIATAISQVFYLL). At 284 to 305 (SKTINPIDPSIFFMIPSSINFS) the chain is on the extracellular side. A helical membrane pass occupies residues 306–326 (STGTIFSLSIWILMSYLMTFL). The Cytoplasmic segment spans residues 327–349 (RNKVEADFNNILNKIPNNLPDFI).

The protein localises to the cell membrane. Functionally, involved in the development of male gametocytes. The chain is Sexual stage-specific protein G37 from Plasmodium berghei (strain Anka).